Reading from the N-terminus, the 136-residue chain is MQYQTESWGSYKMSSLGFGGLGMVADTGLLRIESLASESAVVIFSVSTCCMCHAVKGLFRGMGVSPAVHELDLHPYGGDIQRALIRLLGCSGSSSPGSLPVVFIGGKLVGAMDRVMASHINGSLVPLLKDAGALWL.

Positions 29–135 (LLRIESLASE…PLLKDAGALW (107 aa)) constitute a Glutaredoxin domain. A disulfide bridge links Cys-49 with Cys-52. The Responsive for interaction with TGA factors motif lies at 133-136 (ALWL).

It belongs to the glutaredoxin family. CC-type subfamily. As to quaternary structure, interacts with TGA2, TGA3, TGA7 and PAN. Interacts with TGA9 and TGA10 in the nucleus. Highly expressed in inflorescences, roots, and siliques. Expressed at lower levels in mature flowers.

The protein localises to the cytoplasm. It is found in the nucleus. Functionally, has a glutathione-disulfide oxidoreductase activity in the presence of NADPH and glutathione reductase. Reduces low molecular weight disulfides and proteins. Involved in flower development as a regulator of petal primorida initiation and further petal morphogenesis. May mediate post-translational modifications of target proteins required for normal petal organ initiation and morphogenesis. ROXY1/TGA protein interactions can occur in vivo and support their biological relevance in petal development. May be involved in the regulation of the floral regulator class C gene AG (AGAMOUS). The polypeptide is Glutaredoxin-C7 (GRXC7) (Arabidopsis thaliana (Mouse-ear cress)).